Reading from the N-terminus, the 505-residue chain is Oxidative stress-induced growth inhibitor 2 (505 aa).

This sequence belongs to the OKL38 family. It depends on NADPH as a cofactor. In terms of tissue distribution, ubiquitous. Expressed at higher levels in testis and ovary.

It is found in the midbody. Monooxygenase catalytic activity. May be involved in meiosis or the maturation of germ cells. This is Oxidative stress-induced growth inhibitor 2 from Homo sapiens (Human).